The chain runs to 203 residues: MIENFKEDRCIVCHLKNRAMDKFFDDFLYESVNDYSLRDRIRKGGICPGHARKLESFGDVLAHAIIYSDLLRSFKHNHHIEILPRKKKTQGQNICVFCEKEQGFEDIYTRAFSYFFFTSPQFKSAFAERGFICQRHLNQVLEKTASVSAKRELLSVLESKIDKILNHLERIKEKNDYRNIHINYTADEIRAWHMAVEFVAGTQ.

This is an uncharacterized protein from Caldicellulosiruptor sp. (strain Rt8B.4).